A 422-amino-acid chain; its full sequence is Synaptotagmin-2 (422 aa).

Residues 1-43 (MRNIFKRNQEPNVAPATTTATMPLAPVAPADNSTESTGPGESQ) are disordered. Residues 1 to 60 (MRNIFKRNQEPNVAPATTTATMPLAPVAPADNSTESTGPGESQEDMFAKLKEKFFNEINK) are Vesicular-facing. A compositionally biased stretch (low complexity) spans 14–30 (APATTTATMPLAPVAPA). Over residues 31–40 (DNSTESTGPG) the composition is skewed to polar residues. N32 carries N-linked (GlcNAc...) asparagine glycosylation. Residues 61–87 (IPLPPWALIAMAVVAGLLLLTCCFCIC) traverse the membrane as a helical segment. At 88–422 (KKCCCKKKKN…EVDALLGKNK (335 aa)) the chain is on the cytoplasmic side. The segment at 102-141 (GKGMKNAMNMKDMKGGQDDDDAETGLTEGEGEGEEEKEPE) is disordered. Acidic residues predominate over residues 119–139 (DDDDAETGLTEGEGEGEEEKE). Residues T125 and T128 each carry the phosphothreonine modification. The tract at residues 136–382 (EEKEPENLGK…AIGKIFVGSN (247 aa)) is phospholipid binding. C2 domains lie at 142 to 261 (NLGK…EEWR) and 273 to 406 (KLGD…AQWH). The Ca(2+) site is built by L172, D173, and D179. T202 is modified (phosphothreonine). Y230 carries the post-translational modification Phosphotyrosine. D231, F232, D233, S236, K237, D239, D304, D310, D364, and D366 together coordinate Ca(2+). The residue at position 386 (T386) is a Phosphothreonine.

It belongs to the synaptotagmin family. As to quaternary structure, homotetramer. Heterodimer; heterodimerizes with SYT1 in presence of calcium. Interacts with SCAMP5. Interacts with STON2. Interacts with PRRT2. In terms of assembly, (Microbial infection) Interacts with C.botulinum neurotoxin type B (BoNT/B, botB). (Microbial infection) Interacts with C.botulinum neurotoxin type G (BoNT/G, botG). The cofactor is Ca(2+). Phosphorylation at Thr-202 by WNK1, changes the calcium requirement for SYT2-binding to phospholipid membranes.

Its subcellular location is the cytoplasmic vesicle. The protein resides in the secretory vesicle. The protein localises to the synaptic vesicle membrane. It is found in the chromaffin granule membrane. It localises to the cytoplasm. In terms of biological role, exhibits calcium-dependent phospholipid and inositol polyphosphate binding properties. May have a regulatory role in the membrane interactions during trafficking of synaptic vesicles at the active zone of the synapse. Plays a role in dendrite formation by melanocytes. Functionally, (Microbial infection) Receptor for C.botulinum neurotoxin type B (BoNT/B, botB); interaction is improved in the presence of gangliosides. The toxin binds via the vesicular domain (residues 47-60). (Microbial infection) Receptor for C.botulinum neurotoxin type G (BoNT/G, botG); gangliosides are not required for (or only very slightly improve) binding to a membrane-anchored receptor fragment. The toxin binds via the vesicular domain (residues 47-55). The sequence is that of Synaptotagmin-2 from Mus musculus (Mouse).